The following is a 1342-amino-acid chain: DNA-directed RNA polymerase subunit beta (1342 aa).

Residues lysine 1022 and lysine 1200 each carry the N6-acetyllysine modification.

The protein belongs to the RNA polymerase beta chain family. As to quaternary structure, the RNAP catalytic core consists of 2 alpha, 1 beta, 1 beta' and 1 omega subunit. When a sigma factor is associated with the core the holoenzyme is formed, which can initiate transcription.

The catalysed reaction is RNA(n) + a ribonucleoside 5'-triphosphate = RNA(n+1) + diphosphate. Functionally, DNA-dependent RNA polymerase catalyzes the transcription of DNA into RNA using the four ribonucleoside triphosphates as substrates. The sequence is that of DNA-directed RNA polymerase subunit beta from Escherichia coli O139:H28 (strain E24377A / ETEC).